The chain runs to 209 residues: Thymidine kinase (209 aa).

Residues 9 to 16 and 88 to 91 each bind ATP; these read SAMNAGKT and DEAQ. The active-site Proton acceptor is glutamate 89.

The protein belongs to the thymidine kinase family. In terms of assembly, homotetramer.

The protein resides in the cytoplasm. It carries out the reaction thymidine + ATP = dTMP + ADP + H(+). This Xanthomonas axonopodis pv. citri (strain 306) protein is Thymidine kinase.